Here is a 470-residue protein sequence, read N- to C-terminus: Velvet complex subunit B (470 aa).

Disordered stretches follow at residues 1 to 148 and 223 to 321; these read MNSS…EEGT and VRSS…NPLF. Low complexity predominate over residues 15 to 37; sequence PGPGYSSSVPPPIHAYQQQQQHQ. The span at 38-49 shows a compositional bias: pro residues; that stretch reads HPPPSLLPPPPT. Basic residues predominate over residues 74–86; it reads HQHHAPPPPHHHS. Residues 102-124 are compositionally biased toward pro residues; that stretch reads NQYPRPHPLPPSRNDEPPPPSSE. A Velvet domain is found at 147 to 452; it reads GTGLKYSLDV…ALQGIKIPIR (306 aa). The span at 232–241 shows a compositional bias: low complexity; it reads GASSNNYSYS. Residues 242–255 are compositionally biased toward polar residues; that stretch reads TLEPSTPSYQQQAL. A compositionally biased stretch (low complexity) spans 280-301; sequence QQGYGQAPSYQSSSSYGPPQQY. The segment covering 307–318 has biased composition (polar residues); that stretch reads GYNTDPPASSAN.

The protein belongs to the velvet family. VelB subfamily. Component of the heterotrimeric velvet complex composed of laeA, veA and velB; VeA acting as a bridging protein between laeA and velB. Forms a heterodimeric complex with vosA; the formation of the velB-vosA complex is light-dependent.

Its subcellular location is the nucleus. The protein localises to the cytoplasm. Its function is as follows. Component of the velvet transcription factor complex that controls sexual/asexual developmental ratio in response to light, promoting sexual development in the darkness while stimulating asexual sporulation under illumination. The velvet complex acts as a global regulator for secondary metabolite gene expression. Component of the velB-VosA heterodimeric complex that plays a dual role in activating genes associated with spore maturation and repressing certain development-associated genes. The complex binds DNA through the DNA-binding domain of vosA that recognizes an 11-nucleotide consensus sequence 5'-CTGGCCGCGGC-3' consisting of two motifs in the promoters of key developmental regulatory genes. Controls the expression of the pink pigment aurofusarin and the mycotoxin deoxynivalenol gene clusters. Regulates hyphae formation, hyphal hydrophobicity and conidiation. Regulates of cell wall integrity and pathogenicity. The chain is Velvet complex subunit B from Gibberella zeae (strain ATCC MYA-4620 / CBS 123657 / FGSC 9075 / NRRL 31084 / PH-1) (Wheat head blight fungus).